Consider the following 295-residue polypeptide: GTPase Era (295 aa).

Positions 5 to 172 (YCGYAAIIGR…EQAVHQLMPE (168 aa)) constitute an Era-type G domain. The tract at residues 13–20 (GRPNVGKS) is G1. Residue 13–20 (GRPNVGKS) participates in GTP binding. Residues 39 to 43 (QTTRY) are G2. The tract at residues 60 to 63 (DTPG) is G3. GTP-binding positions include 60–64 (DTPGL) and 121–124 (NKVD). Residues 121–124 (NKVD) form a G4 region. The tract at residues 151–153 (LSA) is G5. The KH type-2 domain maps to 203 to 279 (LGQEIPYSLA…FLQLWVKVKS (77 aa)).

This sequence belongs to the TRAFAC class TrmE-Era-EngA-EngB-Septin-like GTPase superfamily. Era GTPase family. As to quaternary structure, monomer.

Its subcellular location is the cytoplasm. It localises to the cell inner membrane. Functionally, an essential GTPase that binds both GDP and GTP, with rapid nucleotide exchange. Plays a role in 16S rRNA processing and 30S ribosomal subunit biogenesis and possibly also in cell cycle regulation and energy metabolism. The chain is GTPase Era from Coxiella burnetii (strain RSA 331 / Henzerling II).